The following is a 239-amino-acid chain: Ribulose-phosphate 3-epimerase (239 aa).

Residue Ser9 participates in substrate binding. A divalent metal cation contacts are provided by His34, Asp36, and His78. Asp36 acts as the Proton acceptor in catalysis. Residues His78, 154-157 (GFGG), 183-185 (DGG), and 205-207 (GTS) each bind substrate. Asp183 is a binding site for a divalent metal cation. The Proton donor role is filled by Asp183.

This sequence belongs to the ribulose-phosphate 3-epimerase family. It depends on Co(2+) as a cofactor. Requires Fe(2+) as cofactor. Mn(2+) is required as a cofactor. The cofactor is Zn(2+).

It catalyses the reaction D-ribulose 5-phosphate = D-xylulose 5-phosphate. Its pathway is carbohydrate degradation; pentose phosphate pathway; D-xylulose 5-phosphate from D-ribulose 5-phosphate (non-oxidative stage): step 1/1. Functionally, catalyzes the reversible epimerization of D-ribulose 5-phosphate to D-xylulose 5-phosphate. This chain is Ribulose-phosphate 3-epimerase (RPE1), found in Eremothecium gossypii (strain ATCC 10895 / CBS 109.51 / FGSC 9923 / NRRL Y-1056) (Yeast).